The sequence spans 295 residues: Ribosomal RNA small subunit methyltransferase A (295 aa).

Residues asparagine 29, leucine 31, glycine 56, glutamate 77, aspartate 102, and asparagine 128 each contribute to the S-adenosyl-L-methionine site.

Belongs to the class I-like SAM-binding methyltransferase superfamily. rRNA adenine N(6)-methyltransferase family. RsmA subfamily.

Its subcellular location is the cytoplasm. The enzyme catalyses adenosine(1518)/adenosine(1519) in 16S rRNA + 4 S-adenosyl-L-methionine = N(6)-dimethyladenosine(1518)/N(6)-dimethyladenosine(1519) in 16S rRNA + 4 S-adenosyl-L-homocysteine + 4 H(+). Its function is as follows. Specifically dimethylates two adjacent adenosines (A1518 and A1519) in the loop of a conserved hairpin near the 3'-end of 16S rRNA in the 30S particle. May play a critical role in biogenesis of 30S subunits. In Listeria innocua serovar 6a (strain ATCC BAA-680 / CLIP 11262), this protein is Ribosomal RNA small subunit methyltransferase A.